The following is a 100-amino-acid chain: UPF0213 protein YhbQ (100 aa).

A GIY-YIG domain is found at 2 to 77 (TPWFLYLIRT…KQLTKRQKER (76 aa)).

It belongs to the UPF0213 family.

The protein is UPF0213 protein YhbQ of Escherichia coli O81 (strain ED1a).